The following is a 417-amino-acid chain: UDP-N-acetylglucosamine 1-carboxyvinyltransferase (417 aa).

22–23 (KN) serves as a coordination point for phosphoenolpyruvate. R92 serves as a coordination point for UDP-N-acetyl-alpha-D-glucosamine. C116 acts as the Proton donor in catalysis. C116 is subject to 2-(S-cysteinyl)pyruvic acid O-phosphothioketal. UDP-N-acetyl-alpha-D-glucosamine is bound by residues D304 and I326.

It belongs to the EPSP synthase family. MurA subfamily.

Its subcellular location is the cytoplasm. The catalysed reaction is phosphoenolpyruvate + UDP-N-acetyl-alpha-D-glucosamine = UDP-N-acetyl-3-O-(1-carboxyvinyl)-alpha-D-glucosamine + phosphate. Its pathway is cell wall biogenesis; peptidoglycan biosynthesis. Cell wall formation. Adds enolpyruvyl to UDP-N-acetylglucosamine. The protein is UDP-N-acetylglucosamine 1-carboxyvinyltransferase of Geobacter metallireducens (strain ATCC 53774 / DSM 7210 / GS-15).